The sequence spans 153 residues: Transcriptional repressor NrdR (153 aa).

The segment at 3 to 34 (CPFCGHLEDRVIDSRAGGAGEVIRRRRECASC) is a zinc-finger region. Residues 49 to 139 (PTVVKKDGRR…VYRSFRDIDQ (91 aa)) form the ATP-cone domain.

Belongs to the NrdR family. The cofactor is Zn(2+).

Functionally, negatively regulates transcription of bacterial ribonucleotide reductase nrd genes and operons by binding to NrdR-boxes. In Sorangium cellulosum (strain So ce56) (Polyangium cellulosum (strain So ce56)), this protein is Transcriptional repressor NrdR.